The following is a 554-amino-acid chain: Pigment biosynthesis transcriptional activator pigB (554 aa).

The tract at residues 1–21 (MFTSSSPEQRKPRQSRQLPGA) is disordered. Residues 23–40 (CEECRRKKLRCDRQQPQC) constitute a DNA-binding region (zn(2)-C6 fungal-type).

The protein localises to the nucleus. Its function is as follows. Transcription factor; part of the gene cluster that mediates the biosynthesis of azaphilone pigments (MonAzPs), a complex mixture of compounds with a common azaphilone skeleton very widely used as food colorants. Positively regulates the expression of the azaphilone pigments (MonAzPs) gene cluster. This Monascus ruber (Mold) protein is Pigment biosynthesis transcriptional activator pigB.